A 533-amino-acid chain; its full sequence is Tyrosine protein-kinase src-1 (533 aa).

Residue glycine 2 is the site of N-myristoyl glycine attachment. The 62-residue stretch at 71-132 (QERETLVALY…PRNFVAKQQT (62 aa)) folds into the SH3 domain. The SH2 domain occupies 138-237 (WYAGKIPRNR…GLCCQLTFPA (100 aa)). The Protein kinase domain occupies 262-521 (LHLKRKLGDG…TLYHFFDDYF (260 aa)). ATP-binding positions include 268–276 (LGDGNFGEV) and lysine 290. Aspartate 381 (proton acceptor) is an active-site residue. Tyrosine 416 is modified (phosphotyrosine; by autocatalysis). Tyrosine 528 carries the post-translational modification Phosphotyrosine.

It belongs to the protein kinase superfamily. Tyr protein kinase family. SRC subfamily. As to quaternary structure, interacts (via SH2 domain and SH3 domain) with unc-5 (via cytoplasmic domain); the interaction requires kinase activity. Interacts (when activated and phosphorylated at 'Tyr-416') with ina-1 (via cytoplasmic domain) and with ced-2 (via SH2 domain). Mg(2+) is required as a cofactor. Mn(2+) serves as cofactor. Post-translationally, may be phosphorylated on Tyr-528 by csk-1. In terms of tissue distribution, expressed in some neurons (ASE, ADF, AVA, AUA, RMDV and BAG) in the head region, anchor cell, vulva, cells around anus, body wall muscle, pharyngeal muscles in procorpus and metacorpus. Expressed in gonadal distal tip cells.

It is found in the cell membrane. The protein resides in the cell projection. It localises to the phagocytic cup. It carries out the reaction L-tyrosyl-[protein] + ATP = O-phospho-L-tyrosyl-[protein] + ADP + H(+). Its activity is regulated as follows. May be activated by autophosphorylation. May be inhibited by csk-1-mediated phosphorylation. Non-receptor tyrosine-protein kinase which plays a role in endoderm development by controlling spindle orientation in EMS blastomere, probably downstream of receptor mes-1. Also involved in embryonic body morphogenesis, especially in the formation of the pharynx and the intestine. May be dispensable for pharyngeal muscle organization in the adult. Probably phosphorylates netrin receptor unc-5, to regulate distal tip cell (DTC) migration during gonad development and in axon repulsion. Plays a role in the migration of the QR neuroblast, a precursor of the AVM neuron, and in the migration of the axon cone of AVM, ALM, CAN and PVM neurons. May act downstream of migratory protein mig-13 to control AVM neuron migration. Probably downstream of integrin ina-1/pat-3, plays a role in the clearance of apoptotic cells during mid-embryogenesis. Phosphorylates ced-1 at 'Tyr-1019' which promotes ced-1 proteasomal degradation, maintaining appropriate ced-1 levels for apoptotic cell clearance. This chain is Tyrosine protein-kinase src-1, found in Caenorhabditis elegans.